The sequence spans 148 residues: Transcriptional regulator MraZ (148 aa).

SpoVT-AbrB domains are found at residues 5-51 (STQL…PQPV) and 80-123 (ACDV…DMAK).

This sequence belongs to the MraZ family. In terms of assembly, forms oligomers.

Its subcellular location is the cytoplasm. It localises to the nucleoid. The protein is Transcriptional regulator MraZ of Nitrosomonas eutropha (strain DSM 101675 / C91 / Nm57).